The following is a 452-amino-acid chain: tRNA modification GTPase MnmE (452 aa).

The (6S)-5-formyl-5,6,7,8-tetrahydrofolate site is built by Arg-25, Glu-82, and Arg-125. One can recognise a TrmE-type G domain in the interval 221–374 (GLHVVLAGKP…LRARLLALAG (154 aa)). Residue Asn-231 participates in K(+) binding. GTP contacts are provided by residues 231 to 236 (NVGKSS), 250 to 256 (TPIAGTT), 275 to 278 (DTAG), and 355 to 357 (SAR). Position 235 (Ser-235) interacts with Mg(2+). Thr-250, Ile-252, and Thr-255 together coordinate K(+). Thr-256 serves as a coordination point for Mg(2+). Lys-452 is a (6S)-5-formyl-5,6,7,8-tetrahydrofolate binding site.

Belongs to the TRAFAC class TrmE-Era-EngA-EngB-Septin-like GTPase superfamily. TrmE GTPase family. In terms of assembly, homodimer. Heterotetramer of two MnmE and two MnmG subunits. The cofactor is K(+).

It localises to the cytoplasm. Exhibits a very high intrinsic GTPase hydrolysis rate. Involved in the addition of a carboxymethylaminomethyl (cmnm) group at the wobble position (U34) of certain tRNAs, forming tRNA-cmnm(5)s(2)U34. The polypeptide is tRNA modification GTPase MnmE (Bordetella petrii (strain ATCC BAA-461 / DSM 12804 / CCUG 43448)).